A 297-amino-acid chain; its full sequence is Farnesyl diphosphate synthase (297 aa).

Lysine 47, arginine 50, and histidine 79 together coordinate isopentenyl diphosphate. Residues aspartate 86 and aspartate 92 each coordinate Mg(2+). (2E)-geranyl diphosphate is bound at residue arginine 97. Arginine 98 is an isopentenyl diphosphate binding site. 4 residues coordinate (2E)-geranyl diphosphate: lysine 183, threonine 184, glutamine 221, and lysine 238.

The protein belongs to the FPP/GGPP synthase family. Mg(2+) serves as cofactor.

The protein resides in the cytoplasm. It carries out the reaction isopentenyl diphosphate + (2E)-geranyl diphosphate = (2E,6E)-farnesyl diphosphate + diphosphate. The chain is Farnesyl diphosphate synthase from Geobacillus stearothermophilus (Bacillus stearothermophilus).